Consider the following 253-residue polypeptide: uncharacterized protein (253 aa).

Positions 1 to 19 are cleaved as a signal peptide; that stretch reads MRYLKKVTIYISLLILVSG. The N-palmitoyl cysteine moiety is linked to residue cysteine 20. The S-diacylglycerol cysteine moiety is linked to residue cysteine 20.

Belongs to the staphylococcal tandem lipoprotein family.

The protein resides in the cell membrane. This is an uncharacterized protein from Staphylococcus epidermidis (strain ATCC 35984 / DSM 28319 / BCRC 17069 / CCUG 31568 / BM 3577 / RP62A).